The following is a 274-amino-acid chain: AA9 family lytic polysaccharide monooxygenase A (274 aa).

The signal sequence occupies residues 1–22; the sequence is MHVPQFISTGALLALLARPAAA. His23 is a Cu(2+) binding site. An intrachain disulfide couples Cys63 to Cys194. (1,4-beta-D-glucosyl)n is bound by residues Gly67, Asp98, and Ser100. His101 lines the Cu(2+) pocket. An O2-binding site is contributed by His174. (1,4-beta-D-glucosyl)n is bound at residue Asp177. Position 191 (Tyr191) interacts with Cu(2+).

Belongs to the polysaccharide monooxygenase AA9 family. Requires Cu(2+) as cofactor.

Its subcellular location is the secreted. The enzyme catalyses [(1-&gt;4)-beta-D-glucosyl]n+m + reduced acceptor + O2 = 4-dehydro-beta-D-glucosyl-[(1-&gt;4)-beta-D-glucosyl]n-1 + [(1-&gt;4)-beta-D-glucosyl]m + acceptor + H2O.. Functionally, lytic polysaccharide monooxygenase (LPMO) that depolymerizes crystalline and amorphous polysaccharides via the oxidation of scissile alpha- or beta-(1-4)-glycosidic bonds, yielding C4 oxidation products. Catalysis by LPMOs requires the reduction of the active-site copper from Cu(II) to Cu(I) by a reducing agent and H(2)O(2) or O(2) as a cosubstrate. Cleaves a range of polysaccharides, including cellulose, xyloglucan, mixed-linkage glucan and glucomannan. The protein is AA9 family lytic polysaccharide monooxygenase A of Collariella virescens (Soil fungus).